We begin with the raw amino-acid sequence, 332 residues long: Beta-1,3-N-acetylglucosaminyltransferase radical fringe (332 aa).

The Cytoplasmic segment spans residues methionine 1 to arginine 6. Residues valine 7–leucine 29 form a helical; Signal-anchor for type II membrane protein membrane-spanning segment. The Lumenal portion of the chain corresponds to proline 30–glutamine 332. Arginine 75 provides a ligand contact to substrate. Asparagine 114 carries an N-linked (GlcNAc...) asparagine glycan. 2 disulfides stabilise this stretch: cysteine 115-cysteine 126 and cysteine 144-cysteine 208. Residue aspartate 148 participates in substrate binding. Aspartate 149 is a binding site for Mn(2+). The active site involves aspartate 238. Histidine 262 lines the Mn(2+) pocket. A disulfide bridge links cysteine 312 with cysteine 321.

Belongs to the glycosyltransferase 31 family. Requires Mn(2+) as cofactor. In terms of tissue distribution, detected in all the examined tissues (12.5 dpc). High expression found in adult brain.

The protein localises to the golgi apparatus membrane. It catalyses the reaction 3-O-(alpha-L-fucosyl)-L-threonyl-[EGF-like domain protein] + UDP-N-acetyl-alpha-D-glucosamine = 3-O-(N-acetyl-beta-D-glucosaminyl-(1-&gt;3)-alpha-L-fucosyl)-L-threonyl-[EGF-like domain protein] + UDP + H(+). It carries out the reaction 3-O-(alpha-L-fucosyl)-L-seryl-[EGF-like domain protein] + UDP-N-acetyl-alpha-D-glucosamine = 3-O-(N-acetyl-beta-D-glucosaminyl-(1-&gt;3)-alpha-L-fucosyl)-L-seryl-[EGF-like domain protein] + UDP + H(+). Its function is as follows. Glycosyltransferase that initiates the elongation of O-linked fucose residues attached to EGF-like repeats in the extracellular domain of Notch molecules. Modulates NOTCH1 activity by modifying O-fucose residues at specific EGF-like domains resulting in enhancement of NOTCH1 activation by DLL1 and JAG1. May be involved in limb formation and in neurogenesis. The protein is Beta-1,3-N-acetylglucosaminyltransferase radical fringe of Mus musculus (Mouse).